The sequence spans 438 residues: Aspartate--tRNA(Asp) ligase (438 aa).

Glu170 serves as a coordination point for L-aspartate. Residues 192 to 195 (QLYK) are aspartate. Arg214 contacts L-aspartate. ATP-binding positions include 214 to 216 (RAE), 222 to 224 (RHL), and Glu361. Residues Glu361 and Ser364 each contribute to the Mg(2+) site. L-aspartate is bound by residues Ser364 and Arg368. 409–412 (GAER) is a binding site for ATP.

Belongs to the class-II aminoacyl-tRNA synthetase family. Type 2 subfamily. In terms of assembly, homodimer. Mg(2+) serves as cofactor.

The protein localises to the cytoplasm. It catalyses the reaction tRNA(Asp) + L-aspartate + ATP = L-aspartyl-tRNA(Asp) + AMP + diphosphate. Functionally, catalyzes the attachment of L-aspartate to tRNA(Asp) in a two-step reaction: L-aspartate is first activated by ATP to form Asp-AMP and then transferred to the acceptor end of tRNA(Asp). Is specific for tRNA(Asp) since it aspartylates tRNA(Asn) 3 orders of magnitude less efficiently than tRNA(Asp). This is Aspartate--tRNA(Asp) ligase from Thermococcus kodakarensis (strain ATCC BAA-918 / JCM 12380 / KOD1) (Pyrococcus kodakaraensis (strain KOD1)).